The chain runs to 340 residues: uncharacterized protein (340 aa).

The signal sequence occupies residues 1 to 25; sequence MLGIRAMLVMLDYYWIQLITNNDTR. At 26-225 the chain is on the lumenal side; that stretch reads SNNTDTIFVS…RRYMYLFSVS (200 aa). Asn-27, Asn-54, Asn-57, Asn-68, Asn-72, Asn-78, Asn-83, Asn-107, Asn-118, Asn-146, Asn-173, and Asn-180 each carry an N-linked (GlcNAc...) asparagine; by host glycan. The helical transmembrane segment at 226–246 threads the bilayer; that stretch reads CAGITGTVSIILVSLSLLILI. Topologically, residues 247–340 are cytoplasmic; sequence CYYRCGRLLI…PMHMVVCMPA (94 aa).

It belongs to the HHV-5 UL20 protein family.

The protein resides in the host endoplasmic reticulum membrane. This is an uncharacterized protein from Human cytomegalovirus (strain AD169) (HHV-5).